The sequence spans 429 residues: MAFYRSWIGGGGDLVRRYTSSMADDVEIAEEVVKILKTHVAHLAEVGVIPREAAERIAKALDEVDYDALAKGGFEDIHEAVEKWVIDRVGEEAGGWLGLGRSRNDHVAAAIRLAALRKLAELKRGLAALRCALAKRALQYADCAMPSFTHFQPAQAITFGHYLLSIDELVEEFSRALAGVEPLLKRSPLGAGPAGGVKTPIDRRRLAKALGFEDVVGNALYASGSRFFASAAASIVVSFLVELSRYVDDFIRWNSPAIGYVKAPDSHVSTSSIMPHKRNLVTLEVLRARISEAVGHLTALYAVQAKIGAGYSLDLQEATRHLWAILKIAGEGVEVLRDFVEGLEFNCEKARLDAETYYATSSDTAEAIALSGVPFRRAYFQLAEEIKRGSAKLLSPEEAVKRPTEGSANPEEVRRAASARLIFCKTPAF.

Belongs to the lyase 1 family. Argininosuccinate lyase subfamily.

Its subcellular location is the cytoplasm. It catalyses the reaction 2-(N(omega)-L-arginino)succinate = fumarate + L-arginine. Its pathway is amino-acid biosynthesis; L-arginine biosynthesis; L-arginine from L-ornithine and carbamoyl phosphate: step 3/3. The polypeptide is Argininosuccinate lyase (Pyrobaculum calidifontis (strain DSM 21063 / JCM 11548 / VA1)).